The following is a 105-amino-acid chain: Met repressor (105 aa).

It belongs to the MetJ family. Homodimer.

It localises to the cytoplasm. This regulatory protein, when combined with SAM (S-adenosylmethionine) represses the expression of the methionine regulon and of enzymes involved in SAM synthesis. This Haemophilus ducreyi (strain 35000HP / ATCC 700724) protein is Met repressor.